The sequence spans 626 residues: Janus kinase and microtubule-interacting protein 1 (626 aa).

The interval 1–25 (MSKKGRSKGDKPEAETDSVQMANEE) is disordered. Residues 1–365 (MSKKGRSKGD…KLKSLTRENV (365 aa)) are mediates association with microtubules. Coiled coils occupy residues 13 to 255 (EAET…EAER) and 284 to 413 (ERDV…DDLS). The mediates interaction with TYK2 and GABBR1 stretch occupies residues 365–626 (VEMKEKLSAQ…ILFEPKLKFM (262 aa)). Phosphoserine is present on Ser-382. Over residues 452–461 (ETLSETSYNT) the composition is skewed to polar residues. Positions 452-481 (ETLSETSYNTDRTDRTPATPEEDLDETTTR) are disordered. Thr-470 is modified (phosphothreonine). Residues 490–604 (QLTREYQALQ…EFRVLELEVR (115 aa)) are a coiled coil.

Belongs to the JAKMIP family. Homodimer. Interacts with JAK1 and TYK2. Forms a complex with GABBR1 and KIF5B/kinesin-1. Phosphorylated.

The protein localises to the cytoplasm. Its subcellular location is the cytoskeleton. The protein resides in the membrane. Its function is as follows. Associates with microtubules and may play a role in the microtubule-dependent transport of the GABA-B receptor. May play a role in JAK1 signaling and regulate microtubule cytoskeleton rearrangements. This Mus musculus (Mouse) protein is Janus kinase and microtubule-interacting protein 1 (Jakmip1).